Here is a 355-residue protein sequence, read N- to C-terminus: MVRNEKKCIGIIFGGTSNEHYVSISSAKTVFKALISRTNKELFRIKAFYINKHGVWIDSDLSLEILRENSGNNIFEKYQELPNRKINFLNNLEFQNIDIWFPLLHGCNGEDGAIHGLLKFTQKPLIGCGISGSAIGMDKILMKQIFSNLSIPQVNFLAIQNYDLSDDNVKDNLSVEIIEKLNLPVFVKPANSGSSLGISKAKNKSEIIKALQKAWEIDSRIVIEEGLNVRELECGIIGNLKLSTSKIGEVSYSSDWYDYDSKYSTDNKIIIPADIDSQISEQIKDLAIRSCRALNIYGFARVDFFLEKISRKIFLNEINTIPGFTSKSMFPMLWKASGLNIDQLVAKLIDISLDS.

An ATP-grasp domain is found at 143–350 (KQIFSNLSIP…IDQLVAKLID (208 aa)). Position 178–233 (178–233 (IEKLNLPVFVKPANSGSSLGISKAKNKSEIIKALQKAWEIDSRIVIEEGLNVRELE)) interacts with ATP. The Mg(2+) site is built by Asp-303, Glu-317, and Asn-319.

The protein belongs to the D-alanine--D-alanine ligase family. It depends on Mg(2+) as a cofactor. Requires Mn(2+) as cofactor.

The protein resides in the cytoplasm. The enzyme catalyses 2 D-alanine + ATP = D-alanyl-D-alanine + ADP + phosphate + H(+). Its pathway is cell wall biogenesis; peptidoglycan biosynthesis. Functionally, cell wall formation. The polypeptide is D-alanine--D-alanine ligase (Prochlorococcus marinus (strain MIT 9515)).